Consider the following 554-residue polypeptide: Nuclear division defective protein 1 (554 aa).

Disordered regions lie at residues 1–31 (MDRD…NNAD) and 98–117 (IQQQ…ALGS). Low complexity predominate over residues 98-113 (IQQQQQQQQQQQQQQQ). Thr319 is subject to Phosphothreonine; by CDC28. 2 disordered regions span residues 410–475 (PTPN…GKKP) and 493–554 (SSSS…FNSQ). The segment covering 411-427 (TPNCNSLHSTTTGTSAL) has biased composition (polar residues). The span at 448-465 (SSSNTVSFKSKSGNNNSK) shows a compositional bias: low complexity. The segment covering 466-475 (GRIKKNGKKP) has biased composition (basic residues). Residues 493–513 (SSSSLSSSLNASSSAGNSNSN) are compositionally biased toward low complexity. Residues 515–524 (TKKRASKLKR) are compositionally biased toward basic residues. Over residues 525 to 536 (SQSLLSDSGSKS) the composition is skewed to low complexity. Polar residues predominate over residues 539–554 (RKSCNSKSNGNLFNSQ).

Forms an activator complex with FKH2. Phosphorylation of Thr-319 by CDC28 is required for the interaction with FKH2 and recruitment to promoters.

It localises to the cytoplasm. The protein resides in the nucleus. Transcription activator involved in G2/M transcription through its association with FKH2. The polypeptide is Nuclear division defective protein 1 (NDD1) (Saccharomyces cerevisiae (strain ATCC 204508 / S288c) (Baker's yeast)).